The sequence spans 156 residues: MPRKGHIAKRDVLPDPVYNSKVVTKFINSIMEDGKKGVAQKICYEAFGLIAKRSGKEALEVFEEAMNNVMPLLEVKARRIGGATYQVPIEVRPERRQTLGIRWMLIAARKRGEKLMSERVAGELLDASNNTGAAVKKREDTHKMAEANKAFAHYRY.

Belongs to the universal ribosomal protein uS7 family. As to quaternary structure, part of the 30S ribosomal subunit. Contacts proteins S9 and S11.

In terms of biological role, one of the primary rRNA binding proteins, it binds directly to 16S rRNA where it nucleates assembly of the head domain of the 30S subunit. Is located at the subunit interface close to the decoding center, probably blocks exit of the E-site tRNA. The protein is Small ribosomal subunit protein uS7 of Clostridium beijerinckii (strain ATCC 51743 / NCIMB 8052) (Clostridium acetobutylicum).